A 335-amino-acid polypeptide reads, in one-letter code: Fructose-1,6-bisphosphatase class 1 (335 aa).

E92, D114, L116, and D117 together coordinate Mg(2+). Residues 117–120, N209, and K275 contribute to the substrate site; that span reads DGSS. Residue E281 coordinates Mg(2+).

It belongs to the FBPase class 1 family. Homotetramer. Mg(2+) serves as cofactor.

The protein resides in the cytoplasm. It catalyses the reaction beta-D-fructose 1,6-bisphosphate + H2O = beta-D-fructose 6-phosphate + phosphate. Its pathway is carbohydrate biosynthesis; gluconeogenesis. This Paracidovorax citrulli (strain AAC00-1) (Acidovorax citrulli) protein is Fructose-1,6-bisphosphatase class 1.